The following is a 710-amino-acid chain: Effector protein AvrPphD (710 aa).

A compositionally biased stretch (polar residues) spans 1-15; that stretch reads MNPLRSIQHNITTPP. Disordered regions lie at residues 1-36, 136-155, and 173-207; these read MNPL…HPKR, ISFD…SVLS, and SSSL…DSGS.

It is found in the secreted. Functionally, effector protein involved in non-host recognition and able to elicit hypersensitive response (HR). The polypeptide is Effector protein AvrPphD (avrPphD) (Pseudomonas savastanoi pv. phaseolicola (Pseudomonas syringae pv. phaseolicola)).